The following is a 95-amino-acid chain: Aspartyl/glutamyl-tRNA(Asn/Gln) amidotransferase subunit C (95 aa).

It belongs to the GatC family. Heterotrimer of A, B and C subunits.

It catalyses the reaction L-glutamyl-tRNA(Gln) + L-glutamine + ATP + H2O = L-glutaminyl-tRNA(Gln) + L-glutamate + ADP + phosphate + H(+). The enzyme catalyses L-aspartyl-tRNA(Asn) + L-glutamine + ATP + H2O = L-asparaginyl-tRNA(Asn) + L-glutamate + ADP + phosphate + 2 H(+). Functionally, allows the formation of correctly charged Asn-tRNA(Asn) or Gln-tRNA(Gln) through the transamidation of misacylated Asp-tRNA(Asn) or Glu-tRNA(Gln) in organisms which lack either or both of asparaginyl-tRNA or glutaminyl-tRNA synthetases. The reaction takes place in the presence of glutamine and ATP through an activated phospho-Asp-tRNA(Asn) or phospho-Glu-tRNA(Gln). The protein is Aspartyl/glutamyl-tRNA(Asn/Gln) amidotransferase subunit C of Citrifermentans bemidjiense (strain ATCC BAA-1014 / DSM 16622 / JCM 12645 / Bem) (Geobacter bemidjiensis).